The chain runs to 225 residues: PKHD-type hydroxylase YbiX (225 aa).

The 100-residue stretch at 78-177 (TLSTPLFNRY…RVASFMWIQS (100 aa)) folds into the Fe2OG dioxygenase domain. Fe cation is bound by residues histidine 96, aspartate 98, and histidine 158. Arginine 168 contributes to the 2-oxoglutarate binding site.

The cofactor is Fe(2+). L-ascorbate serves as cofactor.

The polypeptide is PKHD-type hydroxylase YbiX (Shigella boydii serotype 4 (strain Sb227)).